Reading from the N-terminus, the 437-residue chain is CMP-5'-(3-aminopropyl)phosphonate hydroxylase (437 aa).

It depends on FAD as a cofactor.

The enzyme catalyses CMP-5'-(3-aminopropyl)phosphonate + NADPH + O2 = CMP-5'-(N-hydroxy-3-aminopropyl)phosphonate + NADP(+) + H2O. It participates in antibiotic biosynthesis. In terms of biological role, hydroxylase involved in the biosynthesis of the phosphonate antibiotic FR-900098, a potent antimalarial agent that acts as an inhibitor of 1-deoxy-D-xylulose 5-phosphate reductoisomerase (DXR), the first enzyme in the nonmevalonate pathway for isoprenoid biosynthesis. Catalyzes the N-hydroxylation of CMP-5'-3-aminopropylphosphonate (CMP-5'-3APn) to CMP-5'-(N-hydroxy-3-aminopropyl)phosphonate (CMP-5'-H3APn). Cannot use CMP-5'-N-acetyl-3-aminopropylphosphonate (CMP-5'-Ac3APn) as a substrate. The polypeptide is CMP-5'-(3-aminopropyl)phosphonate hydroxylase (Streptomyces rubellomurinus (strain ATCC 31215)).